Consider the following 317-residue polypeptide: Olfactory receptor 8B3 (317 aa).

At 1-32 (MISMLAGNGSSVTEFVLAGLTDRPELQLPLFY) the chain is on the extracellular side. N-linked (GlcNAc...) asparagine glycosylation is present at Asn8. The helical transmembrane segment at 33–53 (LFLIIYIITVVGNLGLIILIG) threads the bilayer. The Cytoplasmic segment spans residues 54 to 59 (LNPHLH). The helical transmembrane segment at 60–80 (TPMYYFLFNLSFIDLCYSSVF) threads the bilayer. Residues 81-97 (SPKMLINFVSEKNSISY) are Extracellular-facing. The helical transmembrane segment at 98 to 118 (AGCMTQLFLFLFFVISECYML) threads the bilayer. Residues 119-136 (TSMAYDRYVAICNPLLYK) lie on the Cytoplasmic side of the membrane. Residues 137-157 (VTMSPQICSVISFAAYGMGFA) traverse the membrane as a helical segment. Residues 158–199 (GSSAHTGCMLRLTFCNVNVINHYLCDILPLLQLSCTSTYVNE) are Extracellular-facing. Residues 200 to 220 (VVVLIVVGINITVPSFTILIS) traverse the membrane as a helical segment. Over 221-242 (YVFILANILNIKSTQGRAKAFS) the chain is Cytoplasmic. Residues 243–263 (TCSSHIMAISLFFGSAAFMYL) form a helical membrane-spanning segment. Residues 264–274 (KYSSGSMEQGK) are Extracellular-facing. Residues 275–294 (ISSVFYTNVGPMLNPLIYSL) traverse the membrane as a helical segment. Over 295-317 (RNKDVKVALRKSLIKFREKTDFN) the chain is Cytoplasmic.

It belongs to the G-protein coupled receptor 1 family.

Its subcellular location is the cell membrane. Functionally, odorant receptor. This Mus musculus (Mouse) protein is Olfactory receptor 8B3.